Here is a 338-residue protein sequence, read N- to C-terminus: Glycerol-3-phosphate dehydrogenase [NAD(P)+] (338 aa).

NADPH contacts are provided by serine 13, tryptophan 14, and lysine 108. Residues lysine 108, glycine 139, and serine 141 each contribute to the sn-glycerol 3-phosphate site. An NADPH-binding site is contributed by alanine 143. Sn-glycerol 3-phosphate is bound by residues lysine 194, aspartate 247, serine 257, arginine 258, and asparagine 259. Lysine 194 serves as the catalytic Proton acceptor. An NADPH-binding site is contributed by arginine 258. Valine 282 and glutamate 284 together coordinate NADPH.

Belongs to the NAD-dependent glycerol-3-phosphate dehydrogenase family.

The protein localises to the cytoplasm. The catalysed reaction is sn-glycerol 3-phosphate + NAD(+) = dihydroxyacetone phosphate + NADH + H(+). It catalyses the reaction sn-glycerol 3-phosphate + NADP(+) = dihydroxyacetone phosphate + NADPH + H(+). It functions in the pathway membrane lipid metabolism; glycerophospholipid metabolism. Functionally, catalyzes the reduction of the glycolytic intermediate dihydroxyacetone phosphate (DHAP) to sn-glycerol 3-phosphate (G3P), the key precursor for phospholipid synthesis. The sequence is that of Glycerol-3-phosphate dehydrogenase [NAD(P)+] from Streptococcus pyogenes serotype M12 (strain MGAS9429).